The chain runs to 224 residues: MPGGLLLGDEAPNFEANTTIGHIRFHDFLGDSWGILFSHPRDFTPVCTTELGRAAKLAPEFAKRNVKLIALSIDSVEDHFAWSKDINAYNGAAPTEKLPFPIIDDKDRDLAILLGMLDPAEKDEKGMPVTARVVFIFGPDKKLKLSILYPATTGRNFDEILRVVDSLQLTASNPVATPVDWKKGESVMVLPTLPEEEAKQLFPKGVFTKELPSGKKYLRYTPQP.

The Thioredoxin domain maps to 5 to 169 (LLLGDEAPNF…ILRVVDSLQL (165 aa)). The required and sufficient for targeting to lysosomes and lamellar bodies stretch occupies residues 31–40 (DSWGILFSHP). Thr-44 carries the post-translational modification Phosphothreonine. Catalysis depends on Cys-47, which acts as the Cysteine sulfenic acid (-SOH) intermediate; for peroxidase activity. Lys-63 is modified (N6-acetyllysine). The residue at position 89 (Tyr-89) is a Phosphotyrosine. Asp-140 functions as the For phospholipase activity in the catalytic mechanism. The residue at position 177 (Thr-177) is a Phosphothreonine; by MAPK. Lys-209 is subject to N6-acetyllysine; alternate. Lys-209 carries the N6-succinyllysine; alternate modification.

The protein belongs to the peroxiredoxin family. Prx6 subfamily. Homodimer. Interacts with GSTP1; mediates PRDX6 glutathionylation and regeneration. Interacts with APEX1. Interacts with STH. May interact with FAM168B. May interact with HTR2A. Post-translationally, phosphorylation at Thr-177 by MAP kinases increases the phospholipase activity of the enzyme. Phosphorylated form exhibits a greater lysophosphatidylcholine acyltransferase activity compared to the non-phosphorylated form. Irreversibly inactivated by overoxidation of Cys-47 to sulfinic acid (Cys-SO(2)H) and sulfonic acid (Cys-SO(3)H) forms upon oxidative stress.

The protein resides in the cytoplasm. It localises to the lysosome. It catalyses the reaction a hydroperoxide + 2 glutathione = an alcohol + glutathione disulfide + H2O. The enzyme catalyses a 1,2-diacyl-sn-glycero-3-phosphocholine + H2O = a 1-acyl-sn-glycero-3-phosphocholine + a fatty acid + H(+). It carries out the reaction a 1-acyl-sn-glycero-3-phosphocholine + an acyl-CoA = a 1,2-diacyl-sn-glycero-3-phosphocholine + CoA. The catalysed reaction is 1-hexadecanoyl-sn-glycero-3-phosphocholine + hexadecanoyl-CoA = 1,2-dihexadecanoyl-sn-glycero-3-phosphocholine + CoA. It catalyses the reaction 1,2-dihexadecanoyl-sn-glycero-3-phosphocholine + H2O = 1-hexadecanoyl-sn-glycero-3-phosphocholine + hexadecanoate + H(+). Its function is as follows. Thiol-specific peroxidase that catalyzes the reduction of hydrogen peroxide and organic hydroperoxides to water and alcohols, respectively. Can reduce H(2)O(2) and short chain organic, fatty acid, and phospholipid hydroperoxides. Also has phospholipase activity, can therefore either reduce the oxidized sn-2 fatty acyl group of phospholipids (peroxidase activity) or hydrolyze the sn-2 ester bond of phospholipids (phospholipase activity). These activities are dependent on binding to phospholipids at acidic pH and to oxidized phospholipds at cytosolic pH. Plays a role in cell protection against oxidative stress by detoxifying peroxides and in phospholipid homeostasis. Exhibits acyl-CoA-dependent lysophospholipid acyltransferase which mediates the conversion of lysophosphatidylcholine (1-acyl-sn-glycero-3-phosphocholine or LPC) into phosphatidylcholine (1,2-diacyl-sn-glycero-3-phosphocholine or PC). Shows a clear preference for LPC as the lysophospholipid and for palmitoyl CoA as the fatty acyl substrate. The polypeptide is Peroxiredoxin-6 (Prdx6) (Rattus norvegicus (Rat)).